The following is a 441-amino-acid chain: MLSSVMAPLWACILVAAGILATDTHHPQDSALYHLSKQLLQKYHKEVRPVYNWTKATTVYLDLFVHAILDVDAENQILKTSVWYQEVWNDEFLSWNSSMFDEIREISLPLSAIWAPDIIINEFVDIERYPDLPYVYVNSSGTIENYKPIQVVSACSLETYAFPFDVQNCSLTFKSILHTVEDVDLAFLRSPEDIQHDKKAFLNDSEWELLSVSSTYSILQSSAGGFAQIQFNVVMRRHPLVYVVSLLIPSIFLMLVDLGSFYLPPNCRARIVFKTSVLVGYTVFRVNMSNQVPRSVGSTPLIGHFFTICMAFLVLSLAKSIVLVKFLHDEQRGGQEQPFLCLRGDTDADRPRVEPRAQRAVVTESSLYGEHLAQPGTLKEVWSQLQSISNYLQTQDQTDQQEAEWLVLLSRFDRLLFQSYLFMLGIYTITLCSLWALWGGV.

Residues 1–21 (MLSSVMAPLWACILVAAGILA) form the signal peptide. Over 22 to 238 (TDTHHPQDSA…IQFNVVMRRH (217 aa)) the chain is Extracellular. N-linked (GlcNAc...) asparagine glycosylation is found at Asn52, Asn96, Asn138, Asn168, and Asn203. The cysteines at positions 155 and 169 are disulfide-linked. Residues 239–259 (PLVYVVSLLIPSIFLMLVDLG) traverse the membrane as a helical segment. Over 260–268 (SFYLPPNCR) the chain is Cytoplasmic. Residues 269–286 (ARIVFKTSVLVGYTVFRV) form a helical membrane-spanning segment. N-linked (GlcNAc...) asparagine glycosylation is present at Asn287. At 287-303 (NMSNQVPRSVGSTPLIG) the chain is on the extracellular side. A helical membrane pass occupies residues 304-324 (HFFTICMAFLVLSLAKSIVLV). The Cytoplasmic portion of the chain corresponds to 325-414 (KFLHDEQRGG…WLVLLSRFDR (90 aa)). The interval 381–413 (VWSQLQSISNYLQTQDQTDQQEAEWLVLLSRFD) is HA-stretch; determines single-channel conductance in 5-HT3 receptors. Residues 415 to 435 (LLFQSYLFMLGIYTITLCSLW) traverse the membrane as a helical segment. Over 436–441 (ALWGGV) the chain is Extracellular.

The protein belongs to the ligand-gated ion channel (TC 1.A.9) family. 5-hydroxytryptamine receptor (TC 1.A.9.2) subfamily. HTR3B sub-subfamily. In terms of assembly, forms homopentameric as well as heteropentameric serotonin-activated cation-selective channel complexes with HTR3A. The homomeric complex is not functional. Heteropentameric complexes display properties which resemble that of neuronal serotonin-activated channels in vivo. Post-translationally, N-glycosylation required for membrane localization. In terms of tissue distribution, expressed in the brain cortex, in the caudate nucleus, the hippocampus, the thalamus and the amygdala. Detected in the kidney and testis as well as in monocytes of the spleen, small and large intestine, uterus, prostate, ovary and placenta.

The protein localises to the postsynaptic cell membrane. It is found in the cell membrane. The enzyme catalyses Na(+)(in) = Na(+)(out). It catalyses the reaction K(+)(in) = K(+)(out). The catalysed reaction is Ca(2+)(in) = Ca(2+)(out). Forms serotonin (5-hydroxytryptamine/5-HT3)-activated cation-selective channel complexes, which when activated cause fast, depolarizing responses in neurons. This chain is 5-hydroxytryptamine receptor 3B, found in Homo sapiens (Human).